Reading from the N-terminus, the 307-residue chain is Oxygen-dependent coproporphyrinogen-III oxidase (307 aa).

S97 is a binding site for substrate. A divalent metal cation contacts are provided by H101 and H111. The active-site Proton donor is the H111. Substrate is bound at residue 113–115 (NVR). A divalent metal cation-binding residues include H152 and H182. The important for dimerization stretch occupies residues 247–282 (YVEFNLVWDRGTHFGLQSGGRTESILMSMPPLASWS). A substrate-binding site is contributed by 265-267 (GGR).

The protein belongs to the aerobic coproporphyrinogen-III oxidase family. As to quaternary structure, homodimer. The cofactor is a divalent metal cation.

Its subcellular location is the cytoplasm. The catalysed reaction is coproporphyrinogen III + O2 + 2 H(+) = protoporphyrinogen IX + 2 CO2 + 2 H2O. The protein operates within porphyrin-containing compound metabolism; protoporphyrin-IX biosynthesis; protoporphyrinogen-IX from coproporphyrinogen-III (O2 route): step 1/1. Its function is as follows. Involved in the heme biosynthesis. Catalyzes the aerobic oxidative decarboxylation of propionate groups of rings A and B of coproporphyrinogen-III to yield the vinyl groups in protoporphyrinogen-IX. This Polaromonas naphthalenivorans (strain CJ2) protein is Oxygen-dependent coproporphyrinogen-III oxidase.